A 106-amino-acid chain; its full sequence is uncharacterized protein (106 aa).

This sequence belongs to the HesB/IscA family.

This is an uncharacterized protein from Sinorhizobium fredii (strain NBRC 101917 / NGR234).